The primary structure comprises 256 residues: Pro-opiomelanocortin (256 aa).

An N-terminal signal peptide occupies residues Met1–Gly26. Cysteines 28 and 50 form a disulfide. Thr71 carries O-linked (GalNAc...) threonine glycosylation. Position 87 is a phenylalanine amide (Phe87). Residues Gly88–Arg120 form a disordered region. N-linked (GlcNAc...) asparagine glycosylation occurs at Asn91. Positions Glu100 to Asp122 are excised as a propeptide. An N-acetylserine; in Corticotropin modification is found at Ser125. Val137 carries the valine amide modification. Residue Ser155 is modified to Phosphoserine.

This sequence belongs to the POMC family. Post-translationally, specific enzymatic cleavages at paired basic residues yield the different active peptides. ACTH and MSH are produced by the pituitary gland.

The protein localises to the secreted. ACTH stimulates the adrenal glands to release cortisol. Functionally, MSH (melanocyte-stimulating hormone) increases the pigmentation of skin by increasing melanin production in melanocytes. In terms of biological role, beta-endorphin and Met-enkephalin are endogenous opiates. Its function is as follows. Stimulates the adrenal glands to release cortisol. Anorexigenic peptide. Increases the pigmentation of skin by increasing melanin production in melanocytes. Functionally, increases the pigmentation of skin by increasing melanin production in melanocytes. In terms of biological role, endogenous orexigenic opiate. Its function is as follows. Endogenous opiate. This Cavia porcellus (Guinea pig) protein is Pro-opiomelanocortin (POMC).